Reading from the N-terminus, the 490-residue chain is Mitochondrial-processing peptidase subunit beta (490 aa).

The N-terminal 46 residues, 1–46, are a transit peptide targeting the mitochondrion; sequence MAAAAVARAVLFSAARRRLCGFTERLLIGGAAGRSLYFGGNRLRST. His-102 lines the Zn(2+) pocket. Glu-105 serves as the catalytic Proton acceptor. Zn(2+) is bound by residues His-106 and Glu-182.

It belongs to the peptidase M16 family. As to quaternary structure, heterodimer of PMPCA (alpha) and PMPCB (beta) subunits, forming the mitochondrial processing protease (MPP) in which PMPCA is involved in substrate recognition and binding and PMPCB is the catalytic subunit. Zn(2+) is required as a cofactor.

The protein localises to the mitochondrion matrix. It catalyses the reaction Release of N-terminal transit peptides from precursor proteins imported into the mitochondrion, typically with Arg in position P2.. Its activity is regulated as follows. Binding to PMPCA is required for catalytic activity. Catalytic subunit of the essential mitochondrial processing protease (MPP), which cleaves the mitochondrial sequence off newly imported precursors proteins. Preferentially, cleaves after an arginine at position P2. Required for PINK1 turnover by coupling PINK1 mitochondrial import and cleavage, which results in subsequent PINK1 proteolysis. This Bos taurus (Bovine) protein is Mitochondrial-processing peptidase subunit beta (PMPCB).